An 813-amino-acid chain; its full sequence is Leucine--tRNA ligase (813 aa).

The short motif at 42–52 (PYTSGNLHIGH) is the 'HIGH' region element. A 'KMSKS' region motif is present at residues 580–584 (KMSKS). Residue lysine 583 participates in ATP binding.

This sequence belongs to the class-I aminoacyl-tRNA synthetase family.

The protein resides in the cytoplasm. The enzyme catalyses tRNA(Leu) + L-leucine + ATP = L-leucyl-tRNA(Leu) + AMP + diphosphate. The chain is Leucine--tRNA ligase from Dehalococcoides mccartyi (strain ATCC BAA-2266 / KCTC 15142 / 195) (Dehalococcoides ethenogenes (strain 195)).